The following is a 700-amino-acid chain: DNA topoisomerase 1 (700 aa).

Residues 3–114 (KNLIIVESPA…TLPRIVFHEI (112 aa)) form the Toprim domain. Residues Glu-9 and Asp-83 each contribute to the Mg(2+) site. Residues 130–553 (NMHSVNAQQT…EFYYPFMRKI (424 aa)) form the Topo IA-type catalytic domain. Residues 164–169 (SAGRVQ) form an interaction with DNA region. Catalysis depends on Tyr-298, which acts as the O-(5'-phospho-DNA)-tyrosine intermediate. 3 C4-type zinc fingers span residues 573–599 (CPDC…FPKC), 629–656 (CPSC…YPKC), and 669–692 (CEEC…CLKC).

Belongs to the type IA topoisomerase family. In terms of assembly, monomer. Mg(2+) serves as cofactor.

The enzyme catalyses ATP-independent breakage of single-stranded DNA, followed by passage and rejoining.. Functionally, releases the supercoiling and torsional tension of DNA, which is introduced during the DNA replication and transcription, by transiently cleaving and rejoining one strand of the DNA duplex. Introduces a single-strand break via transesterification at a target site in duplex DNA. The scissile phosphodiester is attacked by the catalytic tyrosine of the enzyme, resulting in the formation of a DNA-(5'-phosphotyrosyl)-enzyme intermediate and the expulsion of a 3'-OH DNA strand. The free DNA strand then undergoes passage around the unbroken strand, thus removing DNA supercoils. Finally, in the religation step, the DNA 3'-OH attacks the covalent intermediate to expel the active-site tyrosine and restore the DNA phosphodiester backbone. The protein is DNA topoisomerase 1 of Campylobacter jejuni subsp. jejuni serotype O:2 (strain ATCC 700819 / NCTC 11168).